The primary structure comprises 534 residues: uncharacterized protein (534 aa).

2 consecutive transmembrane segments (helical) span residues 149-169 and 185-205; these read ILTTLVTVGTTLGTPIFSITI and VFLVIFSVFAIALGLVSSLIF.

It localises to the cell membrane. This is an uncharacterized protein from Mycoplasma pneumoniae (strain ATCC 29342 / M129 / Subtype 1) (Mycoplasmoides pneumoniae).